The primary structure comprises 449 residues: uncharacterized protein (449 aa).

Acidic residues predominate over residues 1–11 (MLDAPEQDPVD). Residues 1–33 (MLDAPEQDPVDPGDPASPPHGEAEQPLPGPRWP) form a disordered region. The chain crosses the membrane as a helical span at residues 45-65 (LLLTALGGLLIAGLVTAIPAV). Residues 349–449 (QPPVPPPDIP…PGPAEPAPAG (101 aa)) are disordered. Residues 365–387 (PPIPLQLPTPRPAPPAQQLPSTP) are compositionally biased toward pro residues. The span at 409–418 (HAPASAAPAE) shows a compositional bias: low complexity. Residues 437-449 (ATPPGPAEPAPAG) are compositionally biased toward pro residues.

It localises to the cell membrane. The protein localises to the secreted. May play a role in septum formation. This is an uncharacterized protein from Mycobacterium tuberculosis (strain CDC 1551 / Oshkosh).